A 213-amino-acid chain; its full sequence is UPF0111 protein TM_0914 (213 aa).

It belongs to the UPF0111 family.

This is UPF0111 protein TM_0914 from Thermotoga maritima (strain ATCC 43589 / DSM 3109 / JCM 10099 / NBRC 100826 / MSB8).